A 267-amino-acid chain; its full sequence is Small ribosomal subunit protein mS23 (267 aa).

A disordered region spans residues 230–267 (VKTASKDGKSSNGSMGAEDVVEKTTSAWETEFVEEESS).

This sequence belongs to the mitochondrion-specific ribosomal protein mS23 family. Component of the mitochondrial small ribosomal subunit.

The protein localises to the mitochondrion. The sequence is that of Small ribosomal subunit protein mS23 (RSM25) from Meyerozyma guilliermondii (strain ATCC 6260 / CBS 566 / DSM 6381 / JCM 1539 / NBRC 10279 / NRRL Y-324) (Yeast).